We begin with the raw amino-acid sequence, 174 residues long: Probable nicotinate-nucleotide adenylyltransferase (174 aa).

Belongs to the NadD family.

The catalysed reaction is nicotinate beta-D-ribonucleotide + ATP + H(+) = deamido-NAD(+) + diphosphate. Its pathway is cofactor biosynthesis; NAD(+) biosynthesis; deamido-NAD(+) from nicotinate D-ribonucleotide: step 1/1. Functionally, catalyzes the reversible adenylation of nicotinate mononucleotide (NaMN) to nicotinic acid adenine dinucleotide (NaAD). In Helicobacter pylori (strain HPAG1), this protein is Probable nicotinate-nucleotide adenylyltransferase.